Reading from the N-terminus, the 196-residue chain is Putative NADH dehydrogenase/NAD(P)H nitroreductase Smlt0482 (196 aa).

This sequence belongs to the nitroreductase family. HadB/RutE subfamily. Requires FMN as cofactor.

In Stenotrophomonas maltophilia (strain K279a), this protein is Putative NADH dehydrogenase/NAD(P)H nitroreductase Smlt0482.